Consider the following 625-residue polypeptide: E3 ubiquitin-protein ligase CHFR (625 aa).

The region spanning 34–85 is the FHA domain; the sequence is WTIGRKKACDLSFPGNKLVSGEHCKITVNEESGEVSLEDTSTNGTVINKLKV. 2 disordered regions span residues 123–171 and 205–229; these read QDSL…PTTS and IPKS…RTED. Residues 140–149 show a composition bias toward polar residues; sequence TQTLSSQDDQ. The segment covering 158-171 has biased composition (low complexity); the sequence is STSTSSLFSTPTTS. Positions 206 to 216 are enriched in polar residues; sequence PKSNLSTQEQG. The RING-type zinc-finger motif lies at 266–305; sequence CIICQELLHDCVSLQPCMHTFCAACYSGWMERSSLCPTCR. Disordered stretches follow at residues 350–386 and 401–427; these read DMLQ…ISQP and MQPP…TSTN. Acidic residues predominate over residues 362-380; that stretch reads DEEGSSEDLLELSDVDSES. Residues 411–427 show a composition bias toward polar residues; that stretch reads DTETSRTQGDAPSTSTN. The segment at 594-616 adopts a PBZ-type zinc-finger fold; sequence PNCYWGRNCRTQVKAHHAMKFNH.

It belongs to the CHFR family.

It is found in the nucleus. Its subcellular location is the PML body. The enzyme catalyses S-ubiquitinyl-[E2 ubiquitin-conjugating enzyme]-L-cysteine + [acceptor protein]-L-lysine = [E2 ubiquitin-conjugating enzyme]-L-cysteine + N(6)-ubiquitinyl-[acceptor protein]-L-lysine.. The protein operates within protein modification; protein ubiquitination. E3 ubiquitin-protein ligase that functions in the antephase checkpoint by actively delaying passage into mitosis in response to microtubule poisons. Acts in early prophase before chromosome condensation, when the centrosome move apart from each other along the periphery of the nucleus. Probably involved in signaling the presence of mitotic stress caused by microtubule poisons by mediating the 'Lys-48'-linked ubiquitination of target proteins, leading to their degradation by the proteasome. May also promote the formation of 'Lys-63'-linked polyubiquitin chains and functions with the specific ubiquitin-conjugating ubc13-mms2 (ube2n-ube2v2) heterodimer. Substrates that are polyubiquitinated at 'Lys-63' are usually not targeted for degradation, but are rather involved in signaling cellular stress. This is E3 ubiquitin-protein ligase CHFR (chfr) from Xenopus laevis (African clawed frog).